Here is a 120-residue protein sequence, read N- to C-terminus: Putative non-specific lipid-transfer protein 14 (120 aa).

An N-terminal signal peptide occupies residues 1 to 22; sequence MTRSFSPVVSLFLLLLQTICSA. Disulfide bonds link C30/C80, C40/C57, C58/C102, and C78/C116.

It belongs to the plant LTP family.

In terms of biological role, plant non-specific lipid-transfer proteins transfer phospholipids as well as galactolipids across membranes. May play a role in wax or cutin deposition in the cell walls of expanding epidermal cells and certain secretory tissues. The protein is Putative non-specific lipid-transfer protein 14 (LTP14) of Arabidopsis thaliana (Mouse-ear cress).